A 607-amino-acid chain; its full sequence is ATP-dependent zinc metalloprotease FtsH 2 (607 aa).

Residues 1–2 lie on the Cytoplasmic side of the membrane; the sequence is MR. The helical transmembrane segment at 3–23 threads the bilayer; sequence SLWIVLVLVLGSALLLQVMAA. The Periplasmic segment spans residues 24–99; that stretch reads SDDRIPYARF…PYTRVADELG (76 aa). A helical membrane pass occupies residues 100 to 120; sequence LPPYLWLLLPLAGLAAMGHLA. At 121–607 the chain is on the cytoplasmic side; it reads SRRATTAGTI…LREMVASGEA (487 aa). ATP is bound at residue 195–202; that stretch reads GPPGTGKT. Residue His-418 participates in Zn(2+) binding. Residue Glu-419 is part of the active site. Zn(2+)-binding residues include His-422 and Asp-495.

The protein in the central section; belongs to the AAA ATPase family. It in the C-terminal section; belongs to the peptidase M41 family. In terms of assembly, homohexamer. The cofactor is Zn(2+).

It localises to the cell inner membrane. Its function is as follows. Acts as a processive, ATP-dependent zinc metallopeptidase for both cytoplasmic and membrane proteins. Plays a role in the quality control of integral membrane proteins. In Sorangium cellulosum (strain So ce56) (Polyangium cellulosum (strain So ce56)), this protein is ATP-dependent zinc metalloprotease FtsH 2.